The primary structure comprises 329 residues: NADH-quinone oxidoreductase subunit H (329 aa).

The next 9 helical transmembrane spans lie at 9–29 (LIKI…ATYI), 42–62 (GPCY…IKLF), 75–95 (FIFT…MAPI), 117–137 (IGFL…ILAG), 154–174 (IQLL…LMVV), 188–208 (GGFL…FLIA), 238–258 (LKWG…SFVI), 269–291 (WGFI…LSMW), and 309–329 (WKIM…IILI).

The protein belongs to the complex I subunit 1 family. In terms of assembly, NDH-1 is composed of 14 different subunits. Subunits NuoA, H, J, K, L, M, N constitute the membrane sector of the complex.

The protein resides in the cell inner membrane. It carries out the reaction a quinone + NADH + 5 H(+)(in) = a quinol + NAD(+) + 4 H(+)(out). Functionally, NDH-1 shuttles electrons from NADH, via FMN and iron-sulfur (Fe-S) centers, to quinones in the respiratory chain. The immediate electron acceptor for the enzyme in this species is believed to be ubiquinone. Couples the redox reaction to proton translocation (for every two electrons transferred, four hydrogen ions are translocated across the cytoplasmic membrane), and thus conserves the redox energy in a proton gradient. This subunit may bind ubiquinone. This chain is NADH-quinone oxidoreductase subunit H, found in Helicobacter pylori (strain HPAG1).